The following is an 862-amino-acid chain: DNA topoisomerase 3-beta-1 (862 aa).

One can recognise a Toprim domain in the interval 3–153 (TVLMVAEKPS…EKTVFRARFS (151 aa)). The Topo IA-type catalytic domain occupies 171-593 (DHNEALSVDA…HTLDIFKRKF (423 aa)). The active-site O-(5'-phospho-DNA)-tyrosine intermediate is Y336. The segment at 820 to 855 (HPMHRGGPGRRQGRGRGRGRRPPGKPNPRRPKDKMS) is disordered. The span at 821-851 (PMHRGGPGRRQGRGRGRGRRPPGKPNPRRPK) shows a compositional bias: basic residues.

Belongs to the type IA topoisomerase family. Highly expressed in testis.

It catalyses the reaction ATP-independent breakage of single-stranded DNA, followed by passage and rejoining.. Functionally, releases the supercoiling and torsional tension of DNA introduced during the DNA replication and transcription by transiently cleaving and rejoining one strand of the DNA duplex. Introduces a single-strand break via transesterification at a target site in duplex DNA. The scissile phosphodiester is attacked by the catalytic tyrosine of the enzyme, resulting in the formation of a DNA-(5'-phosphotyrosyl)-enzyme intermediate and the expulsion of a 3'-OH DNA strand. The free DNA strand than undergoes passage around the unbroken strand thus removing DNA supercoils. Finally, in the religation step, the DNA 3'-OH attacks the covalent intermediate to expel the active-site tyrosine and restore the DNA phosphodiester backbone. Possesses negatively supercoiled DNA relaxing activity. The protein is DNA topoisomerase 3-beta-1 (Top3b) of Mus musculus (Mouse).